We begin with the raw amino-acid sequence, 199 residues long: Cytochrome b (199 aa).

The next 4 helical transmembrane spans lie at 1-8 (LTGLFLAM), 32-53 (WLIRNLHANGASFFFICIYFHI), 68-88 (WNIGVVLLLLVMMTAFVGYVL), and 133-153 (FFAFHFLFPFVILAMTILHLL). Residues His38 and His52 each contribute to the heme b site. Heme b contacts are provided by His137 and His151. Residue His156 participates in a ubiquinone binding. Residues 181 to 199 (YKDLLGFAILLVALASLAH) form a helical membrane-spanning segment.

This sequence belongs to the cytochrome b family. The cytochrome bc1 complex contains 3 respiratory subunits (MT-CYB, CYC1 and UQCRFS1), 2 core proteins (UQCRC1 and UQCRC2) and probably 6 low-molecular weight proteins. Heme b is required as a cofactor.

It is found in the mitochondrion inner membrane. Component of the ubiquinol-cytochrome c reductase complex (complex III or cytochrome b-c1 complex) that is part of the mitochondrial respiratory chain. The b-c1 complex mediates electron transfer from ubiquinol to cytochrome c. Contributes to the generation of a proton gradient across the mitochondrial membrane that is then used for ATP synthesis. In Sarda chiliensis (Pacific bonito), this protein is Cytochrome b (mt-cyb).